The following is a 66-amino-acid chain: Cold shock-like protein (66 aa).

A CSD domain is found at 3 to 62 (GKVKWFDSKKGYGFITKDEGGDVFVHWSAIEMEGFKTLKEGQVVEFEIQEGKKGPQAAHV).

As to quaternary structure, monomer.

The protein resides in the cytoplasm. The chain is Cold shock-like protein (csp) from Thermotoga maritima (strain ATCC 43589 / DSM 3109 / JCM 10099 / NBRC 100826 / MSB8).